A 334-amino-acid polypeptide reads, in one-letter code: Catabolite repressor/activator (334 aa).

The region spanning 1-58 (MKLDEIARLAGVSRTTASYVINGKAKQYRVSDKTVEKVMAVVREHNYHPNAVAAGLRA) is the HTH lacI-type domain. Residues 3-22 (LDEIARLAGVSRTTASYVIN) constitute a DNA-binding region (H-T-H motif).

Homotetramer.

In terms of biological role, global transcriptional regulator, which plays an important role in the regulation of carbon metabolism. The polypeptide is Catabolite repressor/activator (cra) (Salmonella typhimurium (strain LT2 / SGSC1412 / ATCC 700720)).